We begin with the raw amino-acid sequence, 319 residues long: MKFIIDRFDGKKNYEQIYTLAKEDIEAKTLLGVLLLIKQTQDITLNFTASCRMAICGACAVRVNGHSYLACDTKMTELFEEYKNSDTFRISPLGNHRVISDLVVDWEPAIENLRKIKPGLVAKSEFSAKEGCQQNQEEFDRIIKQWDCILCGSCVSECNKFSADQSDYMEPFVFTQAWRLANDSRSKDPMIHVKPAVANGLWNCVHCHECTNRCPKHISAAEDIANLRVMAMKKGLNTGVGPAHAKAFHTDLVEGSGRLNEIRLALRIEGVATVARTGMAITLMRAGKMNPLEIFGGHTIKGHEDLVKMIDAAKAATKE.

Residues 1–96 (MKFIIDRFDG…TFRISPLGNH (96 aa)) enclose the 2Fe-2S ferredoxin-type domain. 4 residues coordinate [2Fe-2S] cluster: C51, C56, C59, and C71. 4Fe-4S ferredoxin-type domains are found at residues 139–168 (FDRI…QSDY) and 193–224 (VKPA…AEDI). 8 residues coordinate [4Fe-4S] cluster: C148, C151, C154, C158, C204, C207, C210, and C214.

The protein belongs to the succinate dehydrogenase/fumarate reductase iron-sulfur protein family. In terms of assembly, the MFR complex is composed of three subunits: a flavoprotein (SdhA), an iron-sulfur protein (SdhB), and one hydrophobic anchor protein (SdhE). [2Fe-2S] cluster is required as a cofactor. The cofactor is [4Fe-4S] cluster.

The protein localises to the periplasm. Its subcellular location is the cell membrane. It catalyses the reaction 8-methylmenaquinone-6 + succinate = 8-methylmenaquinol-6 + fumarate. Iron-sulfur subunit of 8-methylmenaquinol:fumarate reductase (MFR), that catalyzes the reduction of fumarate using 8-methylmenaquinol-6 as electron donor. The complex shows no succinate oxidation activity. Is involved in anaerobic metabolism. The chain is 8-methylmenaquinol:fumarate reductase iron-sulfur subunit from Wolinella succinogenes (strain ATCC 29543 / DSM 1740 / CCUG 13145 / JCM 31913 / LMG 7466 / NCTC 11488 / FDC 602W) (Vibrio succinogenes).